The chain runs to 374 residues: 4-hydroxy-3-methylbut-2-en-1-yl diphosphate synthase (flavodoxin) (374 aa).

[4Fe-4S] cluster contacts are provided by Cys-270, Cys-273, Cys-305, and Glu-312.

This sequence belongs to the IspG family. The cofactor is [4Fe-4S] cluster.

It catalyses the reaction (2E)-4-hydroxy-3-methylbut-2-enyl diphosphate + oxidized [flavodoxin] + H2O + 2 H(+) = 2-C-methyl-D-erythritol 2,4-cyclic diphosphate + reduced [flavodoxin]. It participates in isoprenoid biosynthesis; isopentenyl diphosphate biosynthesis via DXP pathway; isopentenyl diphosphate from 1-deoxy-D-xylulose 5-phosphate: step 5/6. Converts 2C-methyl-D-erythritol 2,4-cyclodiphosphate (ME-2,4cPP) into 1-hydroxy-2-methyl-2-(E)-butenyl 4-diphosphate. This is 4-hydroxy-3-methylbut-2-en-1-yl diphosphate synthase (flavodoxin) from Cellvibrio japonicus (strain Ueda107) (Pseudomonas fluorescens subsp. cellulosa).